The primary structure comprises 549 residues: CTP synthase (549 aa).

The segment at 1 to 272 (MPPKSTTTKH…DAYVVRKLDL (272 aa)) is amidoligase domain. Residue serine 19 coordinates CTP. Residue serine 19 participates in UTP binding. Residues 20-25 (SLGKGL) and aspartate 77 each bind ATP. Residues aspartate 77 and glutamate 146 each coordinate Mg(2+). CTP is bound by residues 153–155 (DIE), 193–198 (KTKPTQ), and lysine 229. UTP contacts are provided by residues 193-198 (KTKPTQ) and lysine 229. Residues 297-548 (NLALVGKYID…VKAAVERKTG (252 aa)) form the Glutamine amidotransferase type-1 domain. Glycine 360 is a binding site for L-glutamine. Cysteine 387 functions as the Nucleophile; for glutamine hydrolysis in the catalytic mechanism. L-glutamine is bound by residues 388 to 391 (LGLQ), glutamate 411, and arginine 473. Catalysis depends on residues histidine 521 and glutamate 523.

Belongs to the CTP synthase family. In terms of assembly, homotetramer.

The enzyme catalyses UTP + L-glutamine + ATP + H2O = CTP + L-glutamate + ADP + phosphate + 2 H(+). The catalysed reaction is L-glutamine + H2O = L-glutamate + NH4(+). It carries out the reaction UTP + NH4(+) + ATP = CTP + ADP + phosphate + 2 H(+). Its pathway is pyrimidine metabolism; CTP biosynthesis via de novo pathway; CTP from UDP: step 2/2. Its activity is regulated as follows. Allosterically activated by GTP, when glutamine is the substrate; GTP has no effect on the reaction when ammonia is the substrate. The allosteric effector GTP functions by stabilizing the protein conformation that binds the tetrahedral intermediate(s) formed during glutamine hydrolysis. Inhibited by the product CTP, via allosteric rather than competitive inhibition. In terms of biological role, catalyzes the ATP-dependent amination of UTP to CTP with either L-glutamine or ammonia as the source of nitrogen. Regulates intracellular CTP levels through interactions with the four ribonucleotide triphosphates. The sequence is that of CTP synthase from Streptomyces avermitilis (strain ATCC 31267 / DSM 46492 / JCM 5070 / NBRC 14893 / NCIMB 12804 / NRRL 8165 / MA-4680).